Consider the following 267-residue polypeptide: Cysteine protease avirulence protein AvrPphB (267 aa).

The N-myristoyl glycine; by host moiety is linked to residue Gly63. Active-site residues include Cys98, His212, and Asp227.

Belongs to the peptidase C58 family. In terms of assembly, in infected plant cells, the 28 kDa product interacts with PBS1. Post-translationally, autocleaved. This function is essential for myristoylation in infected plant cell and for eliciting the plant hypersensitive response. Myristoylation of 28 kDa product in infected plant cells; it mediates the localization to membranes.

It is found in the secreted. It localises to the host membrane. Its function is as follows. Cysteine protease avirulence protein, which is essential during infection of plant cells from cultivar-specific of beans and Arabidopsis thaliana. The autocleavage of the protein is required for virulence function. May act by affecting the plant defense system. In plants lacking R3 or RPS5 resistance genes, it probably impairs the plant defense system and leads to the bacteria multiplication. In contrast, in plants containing the R3 or RPS5 protein, it is unable to induce disease symptoms, explaining its avirulence name. The 7 kDa product is required for the type-III translocation from Pseudomonas strains to the plant, but are partially dispensable for effector recognition following in planta expression. In infected plants, it acts by cleaving the PBS1 protein, which leads to resistance or disease, depending on the presence or absence of RPS5, respectively. Targets the Arabidopsis kinases PBS1, BIK1, PBL1, PBL2, PBL3, PBL5, PBL7, PBL9 and PBL11 for cleavage in vitro. Can block recognition of AvrB avirulence factor by plant cells by cleaving Arabidopsis RIPK kinase and suppressing Arabidopsis RPM1 activation. Cannot block AvrRpm1-induced activation of RPM1. This is Cysteine protease avirulence protein AvrPphB (avrPph3) from Pseudomonas savastanoi pv. phaseolicola (Pseudomonas syringae pv. phaseolicola).